The sequence spans 456 residues: Heme sensor protein HssS (456 aa).

The next 2 membrane-spanning stretches (helical) occupy residues 9–29 and 164–184; these read IAIY…LFAN and TFLA…VIAS. Residues 186-238 form the HAMP domain; sequence YSIIKPIKILKQATERLMHGDFNSPIYQSRHDEIGTLQYRFEAMRQSLKQVDD. The Histidine kinase domain maps to 246-456; sequence NVSHEIKTPL…TFTVTLPETN (211 aa). His249 is modified (phosphohistidine; by autocatalysis).

Autophosphorylated.

The protein localises to the cell membrane. It carries out the reaction ATP + protein L-histidine = ADP + protein N-phospho-L-histidine.. In terms of biological role, member of the two-component regulatory system HssS/HssR involved in intracellular heme homeostasis and tempering of staphylococcal virulence. HssS functions as a heme sensor histidine kinase which is autophosphorylated at a histidine residue and transfers its phosphate group to an aspartate residue of HssR. HssR/HssS activates the expression of hrtAB, an efflux pump, in response to extracellular heme, hemin, hemoglobin or blood. The chain is Heme sensor protein HssS (hssS) from Staphylococcus haemolyticus (strain JCSC1435).